Here is a 454-residue protein sequence, read N- to C-terminus: Probable N-octanoylanthranilate hydrolase AqdA2 (454 aa).

Ser185 (acyl-ester intermediate) is an active-site residue. Catalysis depends on charge relay system residues Glu306 and His379.

It belongs to the type-B carboxylesterase/lipase family.

It catalyses the reaction N-octanoylanthranilate + H2O = anthranilate + octanoate + H(+). Involved in the degradation of the Pseudomonas aeruginosa quorum sensing signal molecules HHQ (2-heptyl-4-quinolone) and PQS (2-heptyl-3-hydroxy-4-quinolone) to anthranilic acid. Probably catalyzes the hydrolysis of N-octanoylanthranilic acid to anthranilic acid. The polypeptide is Probable N-octanoylanthranilate hydrolase AqdA2 (Rhodococcus erythropolis (Arthrobacter picolinophilus)).